The sequence spans 285 residues: Protein HEXIM1 (285 aa).

Disordered stretches follow at residues 1–56 (MSEV…QNPG) and 132–196 (LMED…LQKD). The span at 23–36 (GGWHHPVEREEHPV) shows a compositional bias: basic and acidic residues. Residues 168–180 (TDDDLEEEEDEAG) show a composition bias toward acidic residues. Residues 213–284 (SKQDLIKEYL…QEGKQVAADS (72 aa)) are a coiled coil.

Belongs to the HEXIM family. As to quaternary structure, homooligomer and heterooligomer. Core component of the 7SK RNP complex.

It is found in the nucleus. Its subcellular location is the cytoplasm. Functionally, transcriptional regulator which functions as a general RNA polymerase II transcription inhibitor. Core component of the 7SK RNP complex: in cooperation with 7SK snRNA sequesters P-TEFb in a large inactive 7SK snRNP complex preventing RNA polymerase II phosphorylation and subsequent transcriptional elongation. Plays a role in the regulation of DNA virus-mediated innate immune response by assembling into the HDP-RNP complex, a complex that serves as a platform for IRF3 phosphorylation and subsequent innate immune response activation through the cGAS-STING pathway. This chain is Protein HEXIM1 (hexim1), found in Xenopus laevis (African clawed frog).